Here is a 223-residue protein sequence, read N- to C-terminus: Probable transaldolase (223 aa).

Lys-91 (schiff-base intermediate with substrate) is an active-site residue.

Belongs to the transaldolase family. Type 3B subfamily.

It is found in the cytoplasm. The enzyme catalyses D-sedoheptulose 7-phosphate + D-glyceraldehyde 3-phosphate = D-erythrose 4-phosphate + beta-D-fructose 6-phosphate. It participates in carbohydrate degradation; pentose phosphate pathway; D-glyceraldehyde 3-phosphate and beta-D-fructose 6-phosphate from D-ribose 5-phosphate and D-xylulose 5-phosphate (non-oxidative stage): step 2/3. Its function is as follows. Transaldolase is important for the balance of metabolites in the pentose-phosphate pathway. This is Probable transaldolase from Chlorobium phaeobacteroides (strain BS1).